A 388-amino-acid chain; its full sequence is Chorismate synthase (388 aa).

NADP(+) is bound by residues Arg-39 and Arg-45. FMN contacts are provided by residues 130-132 (RSS), 251-252 (NA), Gly-296, 311-315 (KPIPT), and Arg-337.

Belongs to the chorismate synthase family. In terms of assembly, homotetramer. It depends on FMNH2 as a cofactor.

The enzyme catalyses 5-O-(1-carboxyvinyl)-3-phosphoshikimate = chorismate + phosphate. The protein operates within metabolic intermediate biosynthesis; chorismate biosynthesis; chorismate from D-erythrose 4-phosphate and phosphoenolpyruvate: step 7/7. In terms of biological role, catalyzes the anti-1,4-elimination of the C-3 phosphate and the C-6 proR hydrogen from 5-enolpyruvylshikimate-3-phosphate (EPSP) to yield chorismate, which is the branch point compound that serves as the starting substrate for the three terminal pathways of aromatic amino acid biosynthesis. This reaction introduces a second double bond into the aromatic ring system. In Geobacillus kaustophilus (strain HTA426), this protein is Chorismate synthase.